Reading from the N-terminus, the 642-residue chain is Phosphomethylpyrimidine synthase (642 aa).

Residues Asn-235, Met-264, Tyr-293, His-329, 349-351 (SRG), 390-393 (DGLR), and Glu-429 each bind substrate. His-433 contacts Zn(2+). Residue Tyr-456 coordinates substrate. His-497 contributes to the Zn(2+) binding site. 3 residues coordinate [4Fe-4S] cluster: Cys-577, Cys-580, and Cys-585.

This sequence belongs to the ThiC family. As to quaternary structure, homodimer. It depends on [4Fe-4S] cluster as a cofactor.

It carries out the reaction 5-amino-1-(5-phospho-beta-D-ribosyl)imidazole + S-adenosyl-L-methionine = 4-amino-2-methyl-5-(phosphooxymethyl)pyrimidine + CO + 5'-deoxyadenosine + formate + L-methionine + 3 H(+). Its pathway is cofactor biosynthesis; thiamine diphosphate biosynthesis. Its function is as follows. Catalyzes the synthesis of the hydroxymethylpyrimidine phosphate (HMP-P) moiety of thiamine from aminoimidazole ribotide (AIR) in a radical S-adenosyl-L-methionine (SAM)-dependent reaction. This Alteromonas mediterranea (strain DSM 17117 / CIP 110805 / LMG 28347 / Deep ecotype) protein is Phosphomethylpyrimidine synthase.